The chain runs to 1503 residues: EF-hand calcium-binding domain-containing protein 5 (1503 aa).

A disordered region spans residues 1–23 (MNESASQEELRPAQENRKEDKER). Over residues 8–23 (EELRPAQENRKEDKER) the composition is skewed to basic and acidic residues. Serine 77 carries the post-translational modification Phosphoserine. Disordered stretches follow at residues 477–518 (ASKT…EQGP), 544–656 (IEPG…QGPY), and 730–750 (FPET…KSQK). Residues 549–561 (HTESTLEQGSSRR) are compositionally biased toward polar residues. 2 stretches are compositionally biased toward basic and acidic residues: residues 562–582 (LLTE…HKGS) and 607–622 (GSRR…HKGS). The EF-hand domain occupies 869-904 (RQRLLLEAIFQKWDSDGSGFLDLKEVDELLYTYKEG). Positions 882, 884, 886, and 893 each coordinate Ca(2+).

The protein is EF-hand calcium-binding domain-containing protein 5 (EFCAB5) of Homo sapiens (Human).